We begin with the raw amino-acid sequence, 328 residues long: Formyltetrahydrofolate deformylase 2, mitochondrial (328 aa).

The transit peptide at 1-12 (MIRRVSTTSCLS) directs the protein to the mitochondrion. In terms of domain architecture, ACT spans 46–129 (FHVFHCPDVV…SVVRVPSLDP (84 aa)). Aspartate 272 is an active-site residue.

This sequence belongs to the PurU family. Expressed in leaves, cotyledons, roots, seeds and flowers.

Its subcellular location is the mitochondrion. The enzyme catalyses (6R)-10-formyltetrahydrofolate + H2O = (6S)-5,6,7,8-tetrahydrofolate + formate + H(+). Its function is as follows. Deformylase involved in photorespiration. Prevents excessive accumulation of 5-formyl tetrahydrofolate (THF), a potent inhibitor of the Gly decarboxylase/Ser hydroxymethyltransferase complex. The chain is Formyltetrahydrofolate deformylase 2, mitochondrial (PURU2) from Arabidopsis thaliana (Mouse-ear cress).